Here is a 179-residue protein sequence, read N- to C-terminus: Large ribosomal subunit protein uL5 (179 aa).

It belongs to the universal ribosomal protein uL5 family. Part of the 50S ribosomal subunit; part of the 5S rRNA/L5/L18/L25 subcomplex. Contacts the 5S rRNA and the P site tRNA. Forms a bridge to the 30S subunit in the 70S ribosome.

This is one of the proteins that bind and probably mediate the attachment of the 5S RNA into the large ribosomal subunit, where it forms part of the central protuberance. In the 70S ribosome it contacts protein S13 of the 30S subunit (bridge B1b), connecting the 2 subunits; this bridge is implicated in subunit movement. Contacts the P site tRNA; the 5S rRNA and some of its associated proteins might help stabilize positioning of ribosome-bound tRNAs. This Alcanivorax borkumensis (strain ATCC 700651 / DSM 11573 / NCIMB 13689 / SK2) protein is Large ribosomal subunit protein uL5.